Here is a 768-residue protein sequence, read N- to C-terminus: DNA ligase (768 aa).

Residues 61–65, 110–111, and Glu146 contribute to the NAD(+) site; these read DAEFD and SL. Residue Lys148 is the N6-AMP-lysine intermediate of the active site. 4 residues coordinate NAD(+): Arg169, Glu206, Lys322, and Lys346. Cys443, Cys446, Cys462, and Cys468 together coordinate Zn(2+). One can recognise a BRCT domain in the interval 661–750; it reads SVPRTLEGLT…PAQTGTEAEA (90 aa). The segment at 739 to 768 is disordered; sequence NGPAQTGTEAEAATDEATVVDETAAEAATE. Over residues 746–768 the composition is skewed to low complexity; that stretch reads TEAEAATDEATVVDETAAEAATE.

This sequence belongs to the NAD-dependent DNA ligase family. LigA subfamily. It depends on Mg(2+) as a cofactor. The cofactor is Mn(2+).

The catalysed reaction is NAD(+) + (deoxyribonucleotide)n-3'-hydroxyl + 5'-phospho-(deoxyribonucleotide)m = (deoxyribonucleotide)n+m + AMP + beta-nicotinamide D-nucleotide.. Functionally, DNA ligase that catalyzes the formation of phosphodiester linkages between 5'-phosphoryl and 3'-hydroxyl groups in double-stranded DNA using NAD as a coenzyme and as the energy source for the reaction. It is essential for DNA replication and repair of damaged DNA. This Paenarthrobacter aurescens (strain TC1) protein is DNA ligase.